Here is a 1002-residue protein sequence, read N- to C-terminus: MWPQPRLPPRPAMSEETRQSKLAAAKKKLREYQQRNSPGVPTGAKKKKKIKNGSNPETTTSGGCHSPEDTPKDNAATLQPSDDTVLPGGVPSPGASLTSMAASQNHDADNVPNLMDETKTFSSTESLRQLSQQLNGLVCESATCVNGEGPASSANLKDLESRYQQLAVALDSSYVTNKQLNITIEKLKQQNQEITDQLEEEKKECHQKQGALREQLQVHIQTIGILVSEKAELQTALAHTQHAARQKEGESEDLASRLQYSRRRVGELERALSAVSTQQKKADRYNKELTKERDALRLELYKNTQSNEDLKQEKSELEEKLRVLVTEKAGMQLNLEELQKKLEMTELLLQQFSSRCEAPDANQQLQQAMEERAQLEAHLGQVMESVRQLQMERDKYAENLKGESAMWRQRMQQMSEQVHTLREEKECSMSRVQELETSLAELRNQMAEPPPPEPPAGPSEVEQQLQAEAEHLRKELEGLAGQLQAQVQDNEGLSRLNREQEERLLELERAAELWGEQAEARRQILETMQNDRTTISRALSQNRELKEQLAELQSGFVKLTNENMEITSALQSEQHVKRELGKKLGELQEKLSELKETVELKSQEAQSLQQQRDQYLGHLQQYVAAYQQLTSEKEVLHNQLLLQTQLVDQLQQQEAQGKAVAEMARQELQETQERLEAATQQNQQLRAQLSLMAHPGEGDGLDREEEEDEEEEEEEAVAVPQPMPSIPEDLESREAMVAFFNSAVASAEEEQARLRGQLKEQRVRCRRLAHLLASAQKEPEAAAPAPGTGGDSVCGETHRALQGAMEKLQSRFMELMQEKADLKERVEELEHRCIQLSGETDTIGEYIALYQSQRAVLKERHREKEEYISRLAQDKEEMKVKLLELQELVLRLVGDRNEWHGRFLAAAQNPADEPTSGAPAPQELGAANQQGDLCEVSLAGSVEPAQGEAREGSPRDNPTAQQIMQLLREMQNPRERPGLGSNPCIPFFYRADENDEVKITVI.

Positions 1–11 (MWPQPRLPPRP) are enriched in pro residues. An interaction with p115/USO1 region spans residues 1–84 (MWPQPRLPPR…AATLQPSDDT (84 aa)). The interval 1–107 (MWPQPRLPPR…TSMAASQNHD (107 aa)) is disordered. Residues 16 to 892 (ETRQSKLAAA…LELQELVLRL (877 aa)) are a coiled coil. A dimethylated arginine mark is found at Arg-18, Arg-30, and Arg-35. Positions 26-49 (KKKLREYQQRNSPGVPTGAKKKKK) match the Nuclear localization signal motif. Residue Ser-37 is modified to Phosphoserine. The segment covering 52–63 (NGSNPETTTSGG) has biased composition (polar residues). Position 66 is a phosphoserine (Ser-66). Over residues 95–105 (ASLTSMAASQN) the composition is skewed to polar residues. Phosphoserine is present on residues Ser-273, Ser-438, and Ser-690. A disordered region spans residues 694–724 (HPGEGDGLDREEEEDEEEEEEEAVAVPQPMP). Positions 702 to 716 (DREEEEDEEEEEEEA) are enriched in acidic residues. Residues Ser-937, Ser-953, and Ser-981 each carry the phosphoserine modification. Residues 992-1002 (DENDEVKITVI) form an interaction with GORASP1/GRASP65 region.

Belongs to the GOLGA2 family. As to quaternary structure, homodimer, may assemble into homohexamers. Homotetramer; forms a parallel homotetramer with a flexible rod-like structure that can give rise to I- and Y-shaped conformations. Interacts with GORASP1/GRASP65. The homooligomer forms a complex with GORASP1 with a 1:1 stoichiometry. Interacts with RAB1B that has been activated by GTP-binding. Interacts with p115/USO1; interaction with p115/USO1 inhibits interaction with STX5 and/or RAB1B. Interacts with STX5. Interacts with ZFPL1. Interacts with AKAP450/AKAP9; leading to recruit AKAP450/AKAP9 to the cis-Golgi. Post-translationally, cleaved by caspases at the onset of apoptosis. In terms of processing, methylation by PRMT5 is required for Golgi ribbon formation. While dimethylation at Arg-30 and Arg-35 are confirmed in vivo, it is unclear whether Arg-18 is methylated in vivo. Phosphorylated at Ser-37 by CDK1 at the onset of mitosis, inhibiting the interaction with p115/USO1 and triggering Golgi disassembly. Phosphorylated at Ser-37 in prophase as the Golgi complex starts to break down, and remains phosphorylated during further breakdown and partitioning of the Golgi fragments in metaphase and anaphase. In telophase, GM130 is dephosphorylated by PP2A as the Golgi fragments start to reassemble.

Its subcellular location is the golgi apparatus. The protein localises to the cis-Golgi network membrane. It is found in the endoplasmic reticulum-Golgi intermediate compartment membrane. It localises to the cytoplasm. The protein resides in the cytoskeleton. Its subcellular location is the spindle pole. Peripheral membrane component of the cis-Golgi stack that acts as a membrane skeleton that maintains the structure of the Golgi apparatus, and as a vesicle thether that facilitates vesicle fusion to the Golgi membrane. Required for normal protein transport from the endoplasmic reticulum to the Golgi apparatus and the cell membrane. Together with p115/USO1 and STX5, involved in vesicle tethering and fusion at the cis-Golgi membrane to maintain the stacked and inter-connected structure of the Golgi apparatus. Plays a central role in mitotic Golgi disassembly: phosphorylation at Ser-37 by CDK1 at the onset of mitosis inhibits the interaction with p115/USO1, preventing tethering of COPI vesicles and thereby inhibiting transport through the Golgi apparatus during mitosis. Also plays a key role in spindle pole assembly and centrosome organization. Promotes the mitotic spindle pole assembly by activating the spindle assembly factor TPX2 to nucleate microtubules around the Golgi and capture them to couple mitotic membranes to the spindle: upon phosphorylation at the onset of mitosis, GOLGA2 interacts with importin-alpha via the nuclear localization signal region, leading to recruit importin-alpha to the Golgi membranes and liberate the spindle assembly factor TPX2 from importin-alpha. TPX2 then activates AURKA kinase and stimulates local microtubule nucleation. Upon filament assembly, nascent microtubules are further captured by GOLGA2, thus linking Golgi membranes to the spindle. Regulates the meiotic spindle pole assembly, probably via the same mechanism. Also regulates the centrosome organization. Also required for the Golgi ribbon formation and glycosylation of membrane and secretory proteins. This chain is Golgin subfamily A member 2 (GOLGA2), found in Homo sapiens (Human).